A 334-amino-acid chain; its full sequence is Holliday junction branch migration complex subunit RuvB (334 aa).

Positions 4 to 184 (ADRLIQPQLQ…FGIPLRLEFY (181 aa)) are large ATPase domain (RuvB-L). ATP is bound by residues arginine 24, glycine 65, lysine 68, threonine 69, threonine 70, 131–133 (EDY), arginine 174, tyrosine 184, and arginine 221. Threonine 69 is a binding site for Mg(2+). A small ATPAse domain (RuvB-S) region spans residues 185–255 (NVKDLSTIVS…VAEHALDLLD (71 aa)). Residues 258–334 (GEGFDYMDRK…YLHFGMIKPE (77 aa)) are head domain (RuvB-H). DNA is bound by residues arginine 294, arginine 313, and arginine 318.

It belongs to the RuvB family. In terms of assembly, homohexamer. Forms an RuvA(8)-RuvB(12)-Holliday junction (HJ) complex. HJ DNA is sandwiched between 2 RuvA tetramers; dsDNA enters through RuvA and exits via RuvB. An RuvB hexamer assembles on each DNA strand where it exits the tetramer. Each RuvB hexamer is contacted by two RuvA subunits (via domain III) on 2 adjacent RuvB subunits; this complex drives branch migration. In the full resolvosome a probable DNA-RuvA(4)-RuvB(12)-RuvC(2) complex forms which resolves the HJ.

It is found in the cytoplasm. The catalysed reaction is ATP + H2O = ADP + phosphate + H(+). Its function is as follows. The RuvA-RuvB-RuvC complex processes Holliday junction (HJ) DNA during genetic recombination and DNA repair, while the RuvA-RuvB complex plays an important role in the rescue of blocked DNA replication forks via replication fork reversal (RFR). RuvA specifically binds to HJ cruciform DNA, conferring on it an open structure. The RuvB hexamer acts as an ATP-dependent pump, pulling dsDNA into and through the RuvAB complex. RuvB forms 2 homohexamers on either side of HJ DNA bound by 1 or 2 RuvA tetramers; 4 subunits per hexamer contact DNA at a time. Coordinated motions by a converter formed by DNA-disengaged RuvB subunits stimulates ATP hydrolysis and nucleotide exchange. Immobilization of the converter enables RuvB to convert the ATP-contained energy into a lever motion, pulling 2 nucleotides of DNA out of the RuvA tetramer per ATP hydrolyzed, thus driving DNA branch migration. The RuvB motors rotate together with the DNA substrate, which together with the progressing nucleotide cycle form the mechanistic basis for DNA recombination by continuous HJ branch migration. Branch migration allows RuvC to scan DNA until it finds its consensus sequence, where it cleaves and resolves cruciform DNA. In Shewanella sp. (strain MR-7), this protein is Holliday junction branch migration complex subunit RuvB.